The chain runs to 154 residues: Small ribosomal subunit protein uS7 (154 aa).

This sequence belongs to the universal ribosomal protein uS7 family.

This Nicotiana plumbaginifolia (Leadwort-leaved tobacco) protein is Small ribosomal subunit protein uS7 (RPS5).